Reading from the N-terminus, the 86-residue chain is Small ribosomal subunit protein uS15 (86 aa).

Residues 1–22 (MSVDTQKVIEDNKRSAQDTGSP) form a disordered region. Positions 7-16 (KVIEDNKRSA) are enriched in basic and acidic residues.

The protein belongs to the universal ribosomal protein uS15 family. Part of the 30S ribosomal subunit. Forms a bridge to the 50S subunit in the 70S ribosome, contacting the 23S rRNA.

Functionally, one of the primary rRNA binding proteins, it binds directly to 16S rRNA where it helps nucleate assembly of the platform of the 30S subunit by binding and bridging several RNA helices of the 16S rRNA. Its function is as follows. Forms an intersubunit bridge (bridge B4) with the 23S rRNA of the 50S subunit in the ribosome. The chain is Small ribosomal subunit protein uS15 from Xanthomonas campestris pv. campestris (strain 8004).